Reading from the N-terminus, the 145-residue chain is ATP synthase epsilon chain (145 aa).

The protein belongs to the ATPase epsilon chain family. F-type ATPases have 2 components, CF(1) - the catalytic core - and CF(0) - the membrane proton channel. CF(1) has five subunits: alpha(3), beta(3), gamma(1), delta(1), epsilon(1). CF(0) has three main subunits: a, b and c.

Its subcellular location is the cell membrane. Its function is as follows. Produces ATP from ADP in the presence of a proton gradient across the membrane. The sequence is that of ATP synthase epsilon chain from Buchnera aphidicola subsp. Baizongia pistaciae (strain Bp).